The sequence spans 394 residues: Isopentenyl-diphosphate delta-isomerase (394 aa).

Arginine 10–lysine 11 contributes to the substrate binding site. FMN is bound by residues threonine 67, glycine 68 to threonine 70, serine 101, and asparagine 129. Serine 101–arginine 103 contributes to the substrate binding site. Residue glutamine 168 participates in substrate binding. Mg(2+) is bound at residue glutamate 169. FMN contacts are provided by residues lysine 200, serine 225, threonine 230, glycine 279–arginine 281, and alanine 300–leucine 301.

Belongs to the IPP isomerase type 2 family. Homooctamer. Dimer of tetramers. FMN is required as a cofactor. The cofactor is NADPH. It depends on Mg(2+) as a cofactor.

The protein localises to the cytoplasm. It catalyses the reaction isopentenyl diphosphate = dimethylallyl diphosphate. In terms of biological role, involved in the biosynthesis of isoprenoids. Catalyzes the 1,3-allylic rearrangement of the homoallylic substrate isopentenyl (IPP) to its allylic isomer, dimethylallyl diphosphate (DMAPP). The polypeptide is Isopentenyl-diphosphate delta-isomerase (Pyrococcus furiosus (strain ATCC 43587 / DSM 3638 / JCM 8422 / Vc1)).